The following is a 362-amino-acid chain: Sulfate/thiosulfate import ATP-binding protein CysA (362 aa).

The ABC transporter domain occupies 3-237 (IEIHDLSKQF…PANPFVYEFL (235 aa)). Residue 35 to 42 (GPSGSGKT) participates in ATP binding.

It belongs to the ABC transporter superfamily. Sulfate/tungstate importer (TC 3.A.1.6) family. The complex is composed of two ATP-binding proteins (CysA), two transmembrane proteins (CysT and CysW) and a solute-binding protein (CysP).

It localises to the cell inner membrane. The catalysed reaction is sulfate(out) + ATP + H2O = sulfate(in) + ADP + phosphate + H(+). It catalyses the reaction thiosulfate(out) + ATP + H2O = thiosulfate(in) + ADP + phosphate + H(+). Its function is as follows. Part of the ABC transporter complex CysAWTP involved in sulfate/thiosulfate import. Responsible for energy coupling to the transport system. This chain is Sulfate/thiosulfate import ATP-binding protein CysA, found in Nitrosomonas europaea (strain ATCC 19718 / CIP 103999 / KCTC 2705 / NBRC 14298).